The primary structure comprises 327 residues: Glycerol-3-phosphate dehydrogenase [NAD(P)+] (327 aa).

NADPH-binding residues include Ser-10, Phe-11, Arg-31, and Lys-108. 3 residues coordinate sn-glycerol 3-phosphate: Lys-108, Gly-136, and Ser-138. Ala-140 contacts NADPH. Sn-glycerol 3-phosphate-binding residues include Lys-191, Asp-246, Ser-256, Arg-257, and Asn-258. The active-site Proton acceptor is Lys-191. Arg-257 is an NADPH binding site. NADPH contacts are provided by Leu-281 and Glu-283.

Belongs to the NAD-dependent glycerol-3-phosphate dehydrogenase family.

It is found in the cytoplasm. It catalyses the reaction sn-glycerol 3-phosphate + NAD(+) = dihydroxyacetone phosphate + NADH + H(+). The enzyme catalyses sn-glycerol 3-phosphate + NADP(+) = dihydroxyacetone phosphate + NADPH + H(+). Its pathway is membrane lipid metabolism; glycerophospholipid metabolism. Its function is as follows. Catalyzes the reduction of the glycolytic intermediate dihydroxyacetone phosphate (DHAP) to sn-glycerol 3-phosphate (G3P), the key precursor for phospholipid synthesis. This chain is Glycerol-3-phosphate dehydrogenase [NAD(P)+], found in Ehrlichia ruminantium (strain Welgevonden).